A 656-amino-acid polypeptide reads, in one-letter code: MSKFLDMLSGSQCVSLEKCGDVVVSTNDCMIALYCHFCRDLFTQLPEFLRHLQSNHSDVLHFTKEHNVYSVEELLSGEQDKAHEDAQSAGHNSSSGDSRSLMNSEDSRAIDGSEENSDNSPVKPEQIGKQNEINLLAEVTNILLQTNDKERINDELKPESGVFKGARKKANNESSSLKICDLKSHTIARTSRKRMSLVKNHILRVLDRDLSAKLEMKPLEPNSKLPITEPIQEDNIPGTCFQTPPKPIPSLSQLSVRKSSLTEANHICTKYATNKTAPTVPKLLNNVPKSILTSQQAQVNSDSSEINETYHISEAGSQVTKTTKSFPVKINQIEILQPLKLPKTLITPINEEGVSDQMENSTKNINNAQRKKENPKKFFKKPSELGIKTQGSPNKFLNIIKSKANPIIVNRVQTTSAKASTNKIQIRFNDKTKGFASEFNSTKIRKLKMENCVDLKTEDPCDNTNMRLNKMATIGSCEILKAVGLPAITDNAIEAIMLLPDELETMRKKADQFTKIYRKYDSIWNYRKIFPPAKPDFISQKIFALTREVNKTMLCNLANSDIKGIINQISVWHYNIYTQYIDLDTISEIARYTLKVFSFLPVSFAYFCKCCDDIFILKKEYLKHLISHQVRFQCTKCIKVFKYKGYYEKHLRNAHP.

The C2H2-type 1 zinc finger occupies Leu33–His56. Residues Asp80–Asn131 are disordered. Positions Ala89–Ser104 are enriched in polar residues. C2H2-type zinc fingers lie at residues Tyr606–His628 and Phe632–His655.

Belongs to the Teflon family.

The protein localises to the nucleus. It is found in the chromosome. Its function is as follows. Specifically required in males for proper segregation of autosomal bivalents at meiosis I. Expression is required in the male germ line prior to spermatocyte stage S4. May have a role as a bridging molecule maintaining adhesion to hold autosome bivalents together via heterochromatic connections. The protein is Protein teflon of Drosophila sechellia (Fruit fly).